An 89-amino-acid chain; its full sequence is Signal recognition particle 19 kDa protein (89 aa).

It belongs to the SRP19 family. In terms of assembly, part of the signal recognition particle protein translocation system, which is composed of SRP and FtsY. Archaeal SRP consists of a 7S RNA molecule of 300 nucleotides and two protein subunits: SRP54 and SRP19.

The protein localises to the cytoplasm. Functionally, involved in targeting and insertion of nascent membrane proteins into the cytoplasmic membrane. Binds directly to 7S RNA and mediates binding of the 54 kDa subunit of the SRP. The protein is Signal recognition particle 19 kDa protein of Methanobrevibacter smithii (strain ATCC 35061 / DSM 861 / OCM 144 / PS).